The chain runs to 102 residues: Large ribosomal subunit protein uL24 (102 aa).

It belongs to the universal ribosomal protein uL24 family. Part of the 50S ribosomal subunit.

Functionally, one of two assembly initiator proteins, it binds directly to the 5'-end of the 23S rRNA, where it nucleates assembly of the 50S subunit. Its function is as follows. One of the proteins that surrounds the polypeptide exit tunnel on the outside of the subunit. The chain is Large ribosomal subunit protein uL24 from Leuconostoc citreum (strain KM20).